We begin with the raw amino-acid sequence, 510 residues long: GTPase Der (510 aa).

EngA-type G domains are found at residues 3–166 (PVVA…ATAL) and 220–393 (IKIA…ACAT). Residues 9 to 16 (GRPNVGKS), 56 to 60 (DTGGI), 118 to 121 (NKTD), 226 to 233 (GRPNVGKS), 273 to 277 (DTAGV), and 338 to 341 (NKWD) each bind GTP. A KH-like domain is found at 394–478 (QKTSTSMLTR…PIRIQFQEGN (85 aa)).

It belongs to the TRAFAC class TrmE-Era-EngA-EngB-Septin-like GTPase superfamily. EngA (Der) GTPase family. Associates with the 50S ribosomal subunit.

Functionally, GTPase that plays an essential role in the late steps of ribosome biogenesis. The sequence is that of GTPase Der from Haemophilus ducreyi (strain 35000HP / ATCC 700724).